The following is a 286-amino-acid chain: Prohibitin-2, mitochondrial (286 aa).

Over 1–13 (MSFNKVPNIPGAP) the chain is Mitochondrial matrix. A helical; Signal-anchor for type II membrane protein membrane pass occupies residues 14-32 (ALSALLKVSVIGGLGVYAL). At 33–286 (TNSLYNVDGG…LQEMNLEPKK (254 aa)) the chain is on the mitochondrial intermembrane side. Residues 186–219 (KEFTAAIEAKQVAAQEAERAKFIVEKAEQDRRSA) are a coiled coil.

It belongs to the prohibitin family. In terms of assembly, component of a prohibitin multimeric complex in mitochondrial membranes. Mostly expressed in proliferative tissues, including vasculature, shoot and root apical tissues.

It localises to the mitochondrion inner membrane. In terms of biological role, prohibitin probably acts as a holdase/unfoldase for the stabilization of newly synthesized mitochondrial proteins. This Arabidopsis thaliana (Mouse-ear cress) protein is Prohibitin-2, mitochondrial (PHB2).